A 99-amino-acid chain; its full sequence is MLIMNLQLFAHKKGVGSSKNGRDSESKRLGVKSTDGEFVLAGNIIVRQRGTKIHPGNNVGRGKDDTLFAKIDGVVKFERVGKDKKKASVYPVNVEAIAE.

Residues Met1–Phe9 constitute a propeptide that is removed on maturation.

It belongs to the bacterial ribosomal protein bL27 family. In terms of processing, the N-terminus is cleaved by ribosomal processing cysteine protease Prp.

The sequence is that of Large ribosomal subunit protein bL27 from Clostridium botulinum (strain Eklund 17B / Type B).